The primary structure comprises 196 residues: MLTIGVLGLQGAVREHIHAIEACGAAGLVVKRPEQLNEVDGLILPGGESTTMRRLIDTYQFMEPLREFAAQGKPMFGTCAGLIILAKEIAGSDNPHLGLLNVVVERNSFGRQVDSFEADLTIKGLDEPFTGVFIRAPHILEAGENVEVLSEHNGRIVAAKQGQFLGCSFHPELTEDHRVTQLFVEMVEEYKQKALV.

Residue glycine 47–serine 49 participates in L-glutamine binding. Cysteine 79 (nucleophile) is an active-site residue. Residues arginine 106 and isoleucine 134–arginine 135 each bind L-glutamine. Residues histidine 170 and glutamate 172 each act as charge relay system in the active site.

Belongs to the glutaminase PdxT/SNO family. In the presence of PdxS, forms a dodecamer of heterodimers. Only shows activity in the heterodimer.

It catalyses the reaction aldehydo-D-ribose 5-phosphate + D-glyceraldehyde 3-phosphate + L-glutamine = pyridoxal 5'-phosphate + L-glutamate + phosphate + 3 H2O + H(+). The enzyme catalyses L-glutamine + H2O = L-glutamate + NH4(+). It functions in the pathway cofactor biosynthesis; pyridoxal 5'-phosphate biosynthesis. Catalyzes the hydrolysis of glutamine to glutamate and ammonia as part of the biosynthesis of pyridoxal 5'-phosphate. The resulting ammonia molecule is channeled to the active site of PdxS. The sequence is that of Pyridoxal 5'-phosphate synthase subunit PdxT from Bacillus subtilis (strain 168).